Consider the following 251-residue polypeptide: MFPQIWGVIFLFTPTVFSELFKDPELLAGFYQGDIKAHPIRTRNGIVNQIYHWPNRTVPYMIEDDAFADSHYREILRAISIIEENSCVIFKPATEMDFPMALVITSKGLGCNTVHLGYRNKTQVVNLEIYPLGEGCFRIGSIIHELLHVLGFEHQHVSQNRDQYVSIQWKNINPQYNINFVNNDNSTAWHDFDEGYDYESVMHYVPRAFSRNGQPTIVPLREGAENMGQRFYMSEKDIRKLNKMYRCPDHV.

A signal peptide spans 1-18 (MFPQIWGVIFLFTPTVFS). Positions 44–248 (NGIVNQIYHW…RKLNKMYRCP (205 aa)) constitute a Peptidase M12A domain. N-linked (GlcNAc...) asparagine glycans are attached at residues Asn-55 and Asn-120. Disulfide bonds link Cys-87–Cys-247 and Cys-111–Cys-136. His-144 is a binding site for Zn(2+). Glu-145 is a catalytic residue. Zn(2+) is bound by residues His-148 and His-154. A glycan (N-linked (GlcNAc...) asparagine) is linked at Asn-185.

It depends on Zn(2+) as a cofactor. In terms of processing, undergoes cleavage in the male during mating with a cleaved product detected in the ejaculatory duct and/or bulb of males by 8-10 minutes after the start of mating. Further cleavage occurs in the mated female. May undergo cleavage in a two-step process where it is first cleaved by Sems, making it susceptible to activational cleavage which may be carried out by another protease or by autocleavage. In terms of tissue distribution, produced in the male accessory glands and secreted into seminal fluid. In mated females, confined to the reproductive tract and also detected in eggs laid by mated females (at protein level).

The protein localises to the secreted. In terms of biological role, seminal fluid metalloprotease which is transferred to females during mating and is required for processing of two other seminal fluid proteins Acp26Aa and Acp36DE in mated females. The sequence is that of Seminal metalloprotease 1 from Drosophila melanogaster (Fruit fly).